Consider the following 279-residue polypeptide: Pleckstrin homology domain-containing family F member 1 (279 aa).

The region spanning 35-131 (VLLGEGVLTK…WISHIEECVR (97 aa)) is the PH domain. The segment at 152–212 (DKATDICMRC…VCSLCYRELA (61 aa)) adopts an FYVE-type zinc-finger fold. Residues Cys-158, Cys-161, Cys-175, Cys-178, Cys-183, Cys-186, Cys-204, and Cys-207 each coordinate Zn(2+). The tract at residues 220–263 (AREGIGGSPPQLSHLGGTVCGASSGDDDDSDEDREGNGDGDWPT) is disordered. Residues 244 to 253 (GDDDDSDEDR) are compositionally biased toward acidic residues.

Widely expressed.

The protein resides in the nucleus. It localises to the cytoplasm. It is found in the perinuclear region. The protein localises to the lysosome. Its function is as follows. May induce apoptosis through the lysosomal-mitochondrial pathway. Translocates to the lysosome initiating the permeabilization of lysosomal membrane (LMP) and resulting in the release of CTSD and CTSL to the cytoplasm. Triggers the caspase-independent apoptosis by altering mitochondrial membrane permeabilization (MMP) resulting in the release of PDCD8. The sequence is that of Pleckstrin homology domain-containing family F member 1 (Plekhf1) from Mus musculus (Mouse).